The following is a 249-amino-acid chain: Chitooligosaccharide deacetylase (249 aa).

The Mg(2+) site is built by His-61 and His-125.

This sequence belongs to the YdjC deacetylase family. ChbG subfamily. As to quaternary structure, homodimer. Requires Mg(2+) as cofactor.

It is found in the cytoplasm. The catalysed reaction is N,N'-diacetylchitobiose + H2O = N-acetyl-beta-D-glucosaminyl-(1-&gt;4)-D-glucosamine + acetate. The enzyme catalyses diacetylchitobiose-6'-phosphate + H2O = N'-monoacetylchitobiose-6'-phosphate + acetate. The protein operates within glycan degradation; chitin degradation. In terms of biological role, involved in the degradation of chitin. ChbG is essential for growth on the acetylated chitooligosaccharides chitobiose and chitotriose but is dispensable for growth on cellobiose and chitosan dimer, the deacetylated form of chitobiose. Deacetylation of chitobiose-6-P and chitotriose-6-P is necessary for both the activation of the chb promoter by the regulatory protein ChbR and the hydrolysis of phosphorylated beta-glucosides by the phospho-beta-glucosidase ChbF. Catalyzes the removal of only one acetyl group from chitobiose-6-P to yield monoacetylchitobiose-6-P, the inducer of ChbR and the substrate of ChbF. This is Chitooligosaccharide deacetylase from Escherichia coli (strain K12 / MC4100 / BW2952).